The primary structure comprises 220 residues: MSPSVSVTKVQVENYVFPPTVKPPASTKTLFLGGAGHRGLDVEGKFVKFTVIGVYLEESAVQFLAPKWKGKSAEELIHSVDFFRDIVTGPFEKFTRVRFILPLTGKQFSEKVAENCVAHWKATGTYSDAGSRAIEKFLNVVKSETFLPGASILFTQSPLGSLTISFTKDDSISEAGNAVIENKQFSEAVLETIIGEHGVSPAAKCSIAARMSELFKNSLF.

Residues threonine 50, asparagine 115, and threonine 192 each contribute to the substrate site.

Belongs to the chalcone isomerase family.

The enzyme catalyses a chalcone = a flavanone.. The protein operates within secondary metabolite biosynthesis; flavonoid biosynthesis. In terms of biological role, catalyzes the intramolecular cyclization of bicyclic chalcones into tricyclic (S)-flavanones. Responsible for the isomerization of 4,2',4',6'-tetrahydroxychalcone (also termed chalcone) into naringenin. In Petunia hybrida (Petunia), this protein is Chalcone--flavanone isomerase B (CHI2).